The sequence spans 294 residues: Bifunctional protein FolD (294 aa).

Residues 166–168 (GRS), serine 191, and isoleucine 232 each bind NADP(+).

This sequence belongs to the tetrahydrofolate dehydrogenase/cyclohydrolase family. As to quaternary structure, homodimer.

It catalyses the reaction (6R)-5,10-methylene-5,6,7,8-tetrahydrofolate + NADP(+) = (6R)-5,10-methenyltetrahydrofolate + NADPH. It carries out the reaction (6R)-5,10-methenyltetrahydrofolate + H2O = (6R)-10-formyltetrahydrofolate + H(+). The protein operates within one-carbon metabolism; tetrahydrofolate interconversion. Its function is as follows. Catalyzes the oxidation of 5,10-methylenetetrahydrofolate to 5,10-methenyltetrahydrofolate and then the hydrolysis of 5,10-methenyltetrahydrofolate to 10-formyltetrahydrofolate. This is Bifunctional protein FolD from Nitrobacter hamburgensis (strain DSM 10229 / NCIMB 13809 / X14).